The primary structure comprises 257 residues: 5-oxoprolinase subunit A (257 aa).

Belongs to the LamB/PxpA family. Forms a complex composed of PxpA, PxpB and PxpC.

The catalysed reaction is 5-oxo-L-proline + ATP + 2 H2O = L-glutamate + ADP + phosphate + H(+). In terms of biological role, catalyzes the cleavage of 5-oxoproline to form L-glutamate coupled to the hydrolysis of ATP to ADP and inorganic phosphate. This is 5-oxoprolinase subunit A from Oceanobacillus iheyensis (strain DSM 14371 / CIP 107618 / JCM 11309 / KCTC 3954 / HTE831).